A 596-amino-acid chain; its full sequence is Chaperone protein DnaK (596 aa).

Threonine 174 carries the post-translational modification Phosphothreonine; by autocatalysis. The segment at 576-596 (ANATKDQSSKDQEEVATVVEE) is disordered.

Belongs to the heat shock protein 70 family.

Functionally, acts as a chaperone. The sequence is that of Chaperone protein DnaK from Mycoplasmopsis synoviae (strain 53) (Mycoplasma synoviae).